Here is a 239-residue protein sequence, read N- to C-terminus: Ubiquinone biosynthesis O-methyltransferase (239 aa).

Arg-42, Gly-62, Asp-83, and Met-127 together coordinate S-adenosyl-L-methionine.

The protein belongs to the methyltransferase superfamily. UbiG/COQ3 family.

It carries out the reaction a 3-demethylubiquinol + S-adenosyl-L-methionine = a ubiquinol + S-adenosyl-L-homocysteine + H(+). The catalysed reaction is a 3-(all-trans-polyprenyl)benzene-1,2-diol + S-adenosyl-L-methionine = a 2-methoxy-6-(all-trans-polyprenyl)phenol + S-adenosyl-L-homocysteine + H(+). It participates in cofactor biosynthesis; ubiquinone biosynthesis. Its function is as follows. O-methyltransferase that catalyzes the 2 O-methylation steps in the ubiquinone biosynthetic pathway. This chain is Ubiquinone biosynthesis O-methyltransferase, found in Pectobacterium carotovorum subsp. carotovorum (strain PC1).